We begin with the raw amino-acid sequence, 553 residues long: Probable malate:quinone oxidoreductase (553 aa).

The tract at residues 524–553 is disordered; it reads PPPKIDLGAPSQATGNAPARPAKASADMAL.

The protein belongs to the MQO family. It depends on FAD as a cofactor.

It carries out the reaction (S)-malate + a quinone = a quinol + oxaloacetate. It participates in carbohydrate metabolism; tricarboxylic acid cycle; oxaloacetate from (S)-malate (quinone route): step 1/1. This Burkholderia cenocepacia (strain HI2424) protein is Probable malate:quinone oxidoreductase.